Here is a 449-residue protein sequence, read N- to C-terminus: Protein translocase subunit SecD (449 aa).

Helical transmembrane passes span 6-26 (GLVF…VLPT), 272-292 (LAVK…IAFY), 294-314 (LPGL…LALF), 317-337 (VPVT…GMAV), 379-399 (TFIA…GAPV), and 401-421 (GFAV…IFVT).

Belongs to the SecD/SecF family. SecD subfamily. Forms a complex with SecF. Part of the essential Sec protein translocation apparatus which comprises SecA, SecYEG and auxiliary proteins SecDF. Other proteins may also be involved.

The protein resides in the cell membrane. Its function is as follows. Part of the Sec protein translocase complex. Interacts with the SecYEG preprotein conducting channel. SecDF uses the proton motive force (PMF) to complete protein translocation after the ATP-dependent function of SecA. The sequence is that of Protein translocase subunit SecD from Dehalococcoides mccartyi (strain VS).